A 317-amino-acid chain; its full sequence is Ribosomal protein L11 methyltransferase (317 aa).

The S-adenosyl-L-methionine site is built by Thr-158, Gly-179, Asp-201, and Asn-244.

Belongs to the methyltransferase superfamily. PrmA family.

The protein resides in the cytoplasm. The enzyme catalyses L-lysyl-[protein] + 3 S-adenosyl-L-methionine = N(6),N(6),N(6)-trimethyl-L-lysyl-[protein] + 3 S-adenosyl-L-homocysteine + 3 H(+). In terms of biological role, methylates ribosomal protein L11. The sequence is that of Ribosomal protein L11 methyltransferase from Streptococcus thermophilus (strain CNRZ 1066).